The following is a 149-amino-acid chain: Transcriptional repressor NrdR (149 aa).

Residues 3-34 (CPFCDTEETKVIDSRLVSDGYQVRRRRECGHC) fold into a zinc finger. Residues 49–139 (PKIIKTDGTR…VYLSFDDIDQ (91 aa)) form the ATP-cone domain.

The protein belongs to the NrdR family. The cofactor is Zn(2+).

Its function is as follows. Negatively regulates transcription of bacterial ribonucleotide reductase nrd genes and operons by binding to NrdR-boxes. The chain is Transcriptional repressor NrdR from Haemophilus influenzae (strain PittEE).